The chain runs to 326 residues: ATP-dependent 6-phosphofructokinase (326 aa).

Gly-12 serves as a coordination point for ATP. An ADP-binding site is contributed by Arg-22–Lys-26. Residues Arg-73 to Phe-74 and Gly-103 to Ser-106 contribute to the ATP site. Residue Asp-104 coordinates Mg(2+). Position 126–128 (Thr-126–Asp-128) interacts with substrate. Asp-128 functions as the Proton acceptor in the catalytic mechanism. Arg-155 lines the ADP pocket. Substrate contacts are provided by residues Arg-163 and Met-170–His-172. Residues Gly-186 to Glu-188, Lys-212, and Lys-215 to Ser-217 each bind ADP. Substrate contacts are provided by residues Glu-224, Lys-246, and His-252–Arg-255.

Belongs to the phosphofructokinase type A (PFKA) family. ATP-dependent PFK group I subfamily. Prokaryotic clade 'B1' sub-subfamily. Homotetramer. Requires Mg(2+) as cofactor.

The protein localises to the cytoplasm. It catalyses the reaction beta-D-fructose 6-phosphate + ATP = beta-D-fructose 1,6-bisphosphate + ADP + H(+). It participates in carbohydrate degradation; glycolysis; D-glyceraldehyde 3-phosphate and glycerone phosphate from D-glucose: step 3/4. Allosterically activated by ADP and other diphosphonucleosides, and allosterically inhibited by phosphoenolpyruvate. Its function is as follows. Catalyzes the phosphorylation of D-fructose 6-phosphate to fructose 1,6-bisphosphate by ATP, the first committing step of glycolysis. In Mycoplasmopsis pulmonis (strain UAB CTIP) (Mycoplasma pulmonis), this protein is ATP-dependent 6-phosphofructokinase.